We begin with the raw amino-acid sequence, 968 residues long: Protein translocase subunit SecA 1 (968 aa).

ATP-binding positions include glutamine 86, 104-108 (GEGKT), and aspartate 493. Composition is skewed to basic and acidic residues over residues 858–868 (EAEKTEDKAED) and 883–898 (ESAK…ESVA). The tract at residues 858 to 968 (EAEKTEDKAE…KCHGAPKSRV (111 aa)) is disordered. Zn(2+) contacts are provided by cysteine 949, cysteine 951, cysteine 960, and histidine 961. Basic residues predominate over residues 955–968 (KKYKKCHGAPKSRV).

This sequence belongs to the SecA family. Monomer and homodimer. Part of the essential Sec protein translocation apparatus which comprises SecA, SecYEG and auxiliary proteins SecDF. Other proteins may also be involved. The cofactor is Zn(2+).

It is found in the cell membrane. The protein resides in the cytoplasm. It carries out the reaction ATP + H2O + cellular proteinSide 1 = ADP + phosphate + cellular proteinSide 2.. In terms of biological role, part of the Sec protein translocase complex. Interacts with the SecYEG preprotein conducting channel. Has a central role in coupling the hydrolysis of ATP to the transfer of proteins into and across the cell membrane, serving as an ATP-driven molecular motor driving the stepwise translocation of polypeptide chains across the membrane. In Thermobifida fusca (strain YX), this protein is Protein translocase subunit SecA 1.